The primary structure comprises 246 residues: Sec-independent protein translocase protein TatB (246 aa).

Residues 1–21 form a helical membrane-spanning segment; that stretch reads MFDIGWSELLVIAVVLIVVVG. Disordered regions lie at residues 94 to 122, 179 to 204, and 225 to 246; these read SDLQKATSPSDGLSSTAAPATSEPVAPLV, SRSKAVATPETTVATNASEPASPKPT, and VADAKPAKAARTKAAKPKKDEA. Composition is skewed to polar residues over residues 97–112 and 187–197; these read QKATSPSDGLSSTAAP and PETTVATNASE.

Belongs to the TatB family. As to quaternary structure, the Tat system comprises two distinct complexes: a TatABC complex, containing multiple copies of TatA, TatB and TatC subunits, and a separate TatA complex, containing only TatA subunits. Substrates initially bind to the TatABC complex, which probably triggers association of the separate TatA complex to form the active translocon.

It localises to the cell inner membrane. Part of the twin-arginine translocation (Tat) system that transports large folded proteins containing a characteristic twin-arginine motif in their signal peptide across membranes. Together with TatC, TatB is part of a receptor directly interacting with Tat signal peptides. TatB may form an oligomeric binding site that transiently accommodates folded Tat precursor proteins before their translocation. This Agrobacterium fabrum (strain C58 / ATCC 33970) (Agrobacterium tumefaciens (strain C58)) protein is Sec-independent protein translocase protein TatB.